The sequence spans 391 residues: Cilia- and flagella-associated protein 263 (391 aa).

The segment at 1-21 (MTDDDSETSASETQAQEESDL) is disordered. 2 coiled-coil regions span residues 95-243 (LSVD…NQEL) and 294-369 (LRKE…LKGY).

Belongs to the CFAP263 family. Forms a complex with CFAP184; the interaction is required for functional activity in cilia. Interacts with HAP1 and PCM1.

The protein resides in the cytoplasm. Its subcellular location is the cytoskeleton. The protein localises to the microtubule organizing center. It is found in the centrosome. It localises to the centriolar satellite. The protein resides in the cell projection. Its subcellular location is the cilium. Component of centriolar satellites contributing to primary cilium formation. In complex with CFAP263, acts as a regulator of ciliary beating that connects radial spoke 3 (RS3) to the inner dynein arm (IDA) and the nexin-dynein regulatory complex (N-DRC). The complex is positioned parallel to N-DRC and forms a connection between the arch at the base of RS3, the IDA tail and N-DRC. In Bos taurus (Bovine), this protein is Cilia- and flagella-associated protein 263 (CFAP263).